We begin with the raw amino-acid sequence, 1157 residues long: Cyclin-dependent kinase 12 (1157 aa).

The disordered stretch occupies residues 15-540 (SDVSSEDFSD…RSPTSRDLKH (526 aa)). Residues 18–32 (SSEDFSDQEAGDLDA) are compositionally biased toward acidic residues. Residues 55-76 (GRLDAKPDKEGYDNYRSRRAED) are compositionally biased toward basic and acidic residues. Positions 85-94 (SRQTSSSEAT) are enriched in polar residues. A Phosphothreonine modification is found at threonine 106. Residues 134–162 (RQKRKKQKKEKHKHKSKKKSKKRKKKRAK) show a composition bias toward basic residues. Positions 163 to 176 (SYSSIDSMSDNDIN) are enriched in low complexity. Threonine 184 carries the phosphothreonine modification. Residues 189–215 (PSKSNERTVSAAPSSFTPHNLKESSSP) are compositionally biased toward polar residues. 2 positions are modified to phosphoserine: serine 190 and serine 192. Threonine 217 bears the Phosphothreonine mark. The segment covering 224–255 (PNTNSNYYGESSLETANSALGSNLQVTVTNKQ) has biased composition (polar residues). Residues 256–281 (SISNRLRSPPPSSRSSGNGPRFGNSP) are compositionally biased toward low complexity. A Phosphoserine modification is found at serine 280. Position 283 is a phosphothreonine (threonine 283). Phosphoserine occurs at positions 291, 301, and 314. The span at 315-332 (PHKEDVSAHHRSSHDHGY) shows a compositional bias: basic and acidic residues. The residue at position 353 (serine 353) is a Phosphoserine. Threonine 365 carries the phosphothreonine modification. Basic and acidic residues predominate over residues 392–403 (GKYERYSRDRYS). Positions 408 to 422 (RSPSVQHSRSRQSPS) are enriched in low complexity. Polar residues predominate over residues 444–468 (TTVSSTPSHTTRTSKRASGTGTSGD). Residues 473 to 484 (SPRTSSRYMESS) are compositionally biased toward low complexity. Serine 487 and serine 492 each carry phosphoserine. A compositionally biased stretch (basic residues) spans 495–508 (HHYHHRRSPRMRQR). Residues 518–533 (PSSASSESSASRSRSP) are compositionally biased toward low complexity. At serine 553 the chain carries Phosphoserine. Disordered regions lie at residues 574-661 (ERQE…ADVP) and 675-782 (PFSA…QRPV). Over residues 586–603 (GALTINDNSSSVDGNTPN) the composition is skewed to polar residues. Over residues 609-623 (SAPGSGTPAAASTTS) the composition is skewed to low complexity. Polar residues-rich tracts occupy residues 644–656 (NKQN…NPAS) and 721–731 (VTSSGSANKSV). Phosphoserine is present on residues serine 730, serine 743, serine 747, and serine 755. Residues 746–760 (LSGDDDVIDSPEDFD) show a composition bias toward acidic residues. The Protein kinase domain occupies 804 to 1098 (FEMIAQIGEG…AEDALRSPWL (295 aa)). ATP-binding positions include 810–818 (IGEGTYGQV), lysine 833, and 891–896 (EYMDHD). Aspartate 936 acts as the Proton acceptor in catalysis. Position 1118 (histidine 1118) interacts with ATP.

Belongs to the protein kinase superfamily. CMGC Ser/Thr protein kinase family. CDC2/CDKX subfamily. Interacts with cyclin CycK.

The protein localises to the nucleus. It is found in the chromosome. It catalyses the reaction [DNA-directed RNA polymerase] + ATP = phospho-[DNA-directed RNA polymerase] + ADP + H(+). It carries out the reaction L-seryl-[protein] + ATP = O-phospho-L-seryl-[protein] + ADP + H(+). The catalysed reaction is L-threonyl-[protein] + ATP = O-phospho-L-threonyl-[protein] + ADP + H(+). Functionally, cyclin-dependent kinase which displays CTD kinase activity: hyperphosphorylates the C-terminal heptapeptide repeat domain (CTD) of the largest RNA polymerase II subunit, thereby acting as a key regulator of transcription elongation. This Drosophila melanogaster (Fruit fly) protein is Cyclin-dependent kinase 12 (Cdk12).